Here is a 445-residue protein sequence, read N- to C-terminus: Cytochrome P450 monooxygenase penB (445 aa).

Cys381 is a heme binding site.

The protein belongs to the cytochrome P450 family. Heme is required as a cofactor.

Its pathway is secondary metabolite biosynthesis. It participates in alkaloid biosynthesis. It functions in the pathway mycotoxin biosynthesis. In terms of biological role, cytochrome P450 monooxygenase; part of the gene cluster that mediates the biosynthesis of penigequinolones, potent insecticidal alkaloids that contain a highly modified 10-carbon prenyl group. The first stage is catalyzed by the nonribosomal peptide synthetase penN that condenses anthranilic acid and O-methyl-L-tyrosine to produce 4'-methoxycyclopeptin. 4'-methoxycyclopeptin is then converted to 4'-methoxydehydrocyclopeptin by the ketoglutarate-dependent dioxygenase penM through dehydrogenation to form a double bond between C-alpha and C-beta of the O-methyltyrosine side chain. PenM also converts its first product methoxydehydrocyclopeptin to 4'-methoxycyclopenin. The following conversion of 4'methoxycyclopenin into 4'-methoxyviridicatin is catalyzed by the cyclopenase penL. 4'-methoxyviridicatin is the precursor of quinolone natural products, and is further converted to quinolinone B. The prenyltransferase penI then catalyzes the canonical Friedel-Crafts alkylation of quinolinone B with dimethylallyl cation to yield dimethylallyl quinolone, which is subjected to FAD-dependent dehydrogenation by the FAD-linked oxidoreductase penH to yield conjugated aryl diene. The delta(3') double bond then serves as the site of the second alkylation with DMAPP catalyzed by the prenyltransferase penG to yield a carbenium ion intermediate, which can be attacked by H(2)O to yield a styrenyl quinolone containing a C3'-hydroxyprenyl chain, or undergo cyclization to yield yaequinolones J1 and J2. The conversion of the styrenyl quinolone into the tetrahydrofuran-containing yaequinolone C is performed by the FAD-dependent monooxygenase penE and involves epoxidation of the terminal C7'-C8' olefin, followed by epoxide ring opening initiated by the C3' hydroxyl group. The predicted cysteine hydrolase penJ acts as an epoxide hydrolase that enhances the rate of the 5-exo-tet cyclization step, increasing the yield of yaequinolone C. PenF catalyzes the cationic rearrangement of the epoxide formed by penE (before ring opening to produce yaequinolone C) into yaequinolone D. Finally, the short-chain dehydrogenase/reductase (SDR)-like reductase penD, catalyzes both the dehydration of yaequinolone D and the reduction of the resulting oxonium to yield penigequinolone. The chain is Cytochrome P450 monooxygenase penB from Penicillium thymicola.